The primary structure comprises 195 residues: ATP-dependent Clp protease proteolytic subunit (195 aa).

Serine 99 serves as the catalytic Nucleophile. Residue histidine 124 is part of the active site.

This sequence belongs to the peptidase S14 family. As to quaternary structure, fourteen ClpP subunits assemble into 2 heptameric rings which stack back to back to give a disk-like structure with a central cavity, resembling the structure of eukaryotic proteasomes.

It is found in the cytoplasm. The enzyme catalyses Hydrolysis of proteins to small peptides in the presence of ATP and magnesium. alpha-casein is the usual test substrate. In the absence of ATP, only oligopeptides shorter than five residues are hydrolyzed (such as succinyl-Leu-Tyr-|-NHMec, and Leu-Tyr-Leu-|-Tyr-Trp, in which cleavage of the -Tyr-|-Leu- and -Tyr-|-Trp bonds also occurs).. In terms of biological role, cleaves peptides in various proteins in a process that requires ATP hydrolysis. Has a chymotrypsin-like activity. Plays a major role in the degradation of misfolded proteins. This Desulforamulus reducens (strain ATCC BAA-1160 / DSM 100696 / MI-1) (Desulfotomaculum reducens) protein is ATP-dependent Clp protease proteolytic subunit.